The sequence spans 261 residues: Cytochrome c oxidase subunit 3 (261 aa).

Topologically, residues 1-15 are mitochondrial matrix; sequence MTHQTHAYHMVNPSP. A helical transmembrane segment spans residues 16 to 34; that stretch reads WPLTGALSALLMTSGLIMW. Over 35-40 the chain is Mitochondrial intermembrane; that stretch reads FHFNST. A helical membrane pass occupies residues 41–66; the sequence is TLLMLGLTTNMLTMYQWWRDVIREST. Over 67 to 72 the chain is Mitochondrial matrix; the sequence is FQGHHT. The chain crosses the membrane as a helical span at residues 73-105; sequence PNVQKGLRYGMILFIISEVLFFTGFFWAFYHSS. Residues 106–128 are Mitochondrial intermembrane-facing; it reads LAPTPELGGCWPPTGIHPLNPLE. The chain crosses the membrane as a helical span at residues 129–152; it reads VPLLNTSVLLASGVSITWAHHSLM. Residues 153–155 lie on the Mitochondrial matrix side of the membrane; sequence EGN. Residues 156–183 form a helical membrane-spanning segment; that stretch reads RNHMLQALFITIALGVYFTLLQASEYYE. The Mitochondrial intermembrane portion of the chain corresponds to 184–190; that stretch reads APFTISD. A helical membrane pass occupies residues 191–223; sequence GVYGSTFFVATGFHGLHVIIGSTFLIVCFFRQL. The Mitochondrial matrix segment spans residues 224-232; the sequence is KFHFTSSHH. A helical membrane pass occupies residues 233–256; the sequence is FGFEAAAWYWHFVDVVWLFLYVSI. Residues 257 to 261 lie on the Mitochondrial intermembrane side of the membrane; it reads YWWGS.

The protein belongs to the cytochrome c oxidase subunit 3 family. In terms of assembly, component of the cytochrome c oxidase (complex IV, CIV), a multisubunit enzyme composed of 14 subunits. The complex is composed of a catalytic core of 3 subunits MT-CO1, MT-CO2 and MT-CO3, encoded in the mitochondrial DNA, and 11 supernumerary subunits COX4I, COX5A, COX5B, COX6A, COX6B, COX6C, COX7A, COX7B, COX7C, COX8 and NDUFA4, which are encoded in the nuclear genome. The complex exists as a monomer or a dimer and forms supercomplexes (SCs) in the inner mitochondrial membrane with NADH-ubiquinone oxidoreductase (complex I, CI) and ubiquinol-cytochrome c oxidoreductase (cytochrome b-c1 complex, complex III, CIII), resulting in different assemblies (supercomplex SCI(1)III(2)IV(1) and megacomplex MCI(2)III(2)IV(2)).

Its subcellular location is the mitochondrion inner membrane. It carries out the reaction 4 Fe(II)-[cytochrome c] + O2 + 8 H(+)(in) = 4 Fe(III)-[cytochrome c] + 2 H2O + 4 H(+)(out). Functionally, component of the cytochrome c oxidase, the last enzyme in the mitochondrial electron transport chain which drives oxidative phosphorylation. The respiratory chain contains 3 multisubunit complexes succinate dehydrogenase (complex II, CII), ubiquinol-cytochrome c oxidoreductase (cytochrome b-c1 complex, complex III, CIII) and cytochrome c oxidase (complex IV, CIV), that cooperate to transfer electrons derived from NADH and succinate to molecular oxygen, creating an electrochemical gradient over the inner membrane that drives transmembrane transport and the ATP synthase. Cytochrome c oxidase is the component of the respiratory chain that catalyzes the reduction of oxygen to water. Electrons originating from reduced cytochrome c in the intermembrane space (IMS) are transferred via the dinuclear copper A center (CU(A)) of subunit 2 and heme A of subunit 1 to the active site in subunit 1, a binuclear center (BNC) formed by heme A3 and copper B (CU(B)). The BNC reduces molecular oxygen to 2 water molecules using 4 electrons from cytochrome c in the IMS and 4 protons from the mitochondrial matrix. This Gazella bennettii (Chinkara) protein is Cytochrome c oxidase subunit 3 (MT-CO3).